A 296-amino-acid chain; its full sequence is Phosphoribosylaminoimidazole-succinocarboxamide synthase (296 aa).

The protein belongs to the SAICAR synthetase family.

The catalysed reaction is 5-amino-1-(5-phospho-D-ribosyl)imidazole-4-carboxylate + L-aspartate + ATP = (2S)-2-[5-amino-1-(5-phospho-beta-D-ribosyl)imidazole-4-carboxamido]succinate + ADP + phosphate + 2 H(+). Its pathway is purine metabolism; IMP biosynthesis via de novo pathway; 5-amino-1-(5-phospho-D-ribosyl)imidazole-4-carboxamide from 5-amino-1-(5-phospho-D-ribosyl)imidazole-4-carboxylate: step 1/2. This is Phosphoribosylaminoimidazole-succinocarboxamide synthase from Syntrophotalea carbinolica (strain DSM 2380 / NBRC 103641 / GraBd1) (Pelobacter carbinolicus).